The primary structure comprises 2275 residues: Serine-rich adhesin for platelets (2275 aa).

An N-terminal signal peptide occupies residues 1–89 (MSKRQKEFHD…VNMLHDQQAF (89 aa)). The serine-rich repeat region 1, SRR1 stretch occupies residues 90 to 230 (AASDAPLTSE…KTSTTSTSTA (141 aa)). The span at 100 to 111 (LNTQSETVGNQN) shows a compositional bias: polar residues. 2 disordered regions span residues 100–229 (LNTQ…STST) and 751–2247 (NSMS…GLLG). Low complexity predominate over residues 112-128 (STTIEASTSTADSTSVT). Residues 129–140 (KNSSSVQTSNSD) show a composition bias toward polar residues. The segment covering 150 to 229 (VTSTTNSTSN…NKTSTTSTST (80 aa)) has biased composition (low complexity). The tract at residues 231-751 (PVKLRTFSRL…TTFKYEVTRN (521 aa)) is non-repeat region (NRR). Composition is skewed to low complexity over residues 752–1392 (SMSD…LSLS) and 1402–2218 (SNSA…ATSE). The tract at residues 752–2236 (SMSDSVSTSG…AQSEKRLPDT (1485 aa)) is serine-rich repeat region 2, SRR2. The short motif at 2233-2237 (LPDTG) is the LPXTG sorting signal element. Pentaglycyl murein peptidoglycan amidated threonine is present on Thr2236. A propeptide spans 2237–2275 (GDSIKQNGLLGGVMTLLVGLGLMKRKKKKDENDQDDSQA) (removed by sortase).

Belongs to the serine-rich repeat protein (SRRP) family. Post-translationally, proteolytically cleaved by a metalloprotease. In terms of processing, glycosylated. It is probable that most of the Ser residues in SSR1 and SSR2 are O-GlcNAcylated. Sequential glycosylation by sugar transferases are able to generate complex sugar polymorphisms.

The protein localises to the secreted. It is found in the cell wall. Functionally, mediates binding to human platelets, possibly through a receptor-ligand interaction. Probably associated with virulence in endovascular infection. This chain is Serine-rich adhesin for platelets (sraP), found in Staphylococcus aureus (strain MSSA476).